We begin with the raw amino-acid sequence, 243 residues long: Tryptophan synthase alpha chain (243 aa).

Residues glutamate 32 and aspartate 43 each act as proton acceptor in the active site.

Belongs to the TrpA family. As to quaternary structure, tetramer of two alpha and two beta chains.

It is found in the plastid. The protein resides in the chloroplast. The enzyme catalyses (1S,2R)-1-C-(indol-3-yl)glycerol 3-phosphate + L-serine = D-glyceraldehyde 3-phosphate + L-tryptophan + H2O. Its pathway is amino-acid biosynthesis; L-tryptophan biosynthesis; L-tryptophan from chorismate: step 5/5. Its function is as follows. The alpha subunit is responsible for the aldol cleavage of indoleglycerol phosphate to indole and glyceraldehyde 3-phosphate. This Cyanidioschyzon merolae (strain NIES-3377 / 10D) (Unicellular red alga) protein is Tryptophan synthase alpha chain.